The chain runs to 209 residues: Outer-membrane lipoprotein carrier protein (209 aa).

The N-terminal stretch at M1–A21 is a signal peptide.

This sequence belongs to the LolA family. In terms of assembly, monomer.

It is found in the periplasm. Its function is as follows. Participates in the translocation of lipoproteins from the inner membrane to the outer membrane. Only forms a complex with a lipoprotein if the residue after the N-terminal Cys is not an aspartate (The Asp acts as a targeting signal to indicate that the lipoprotein should stay in the inner membrane). This is Outer-membrane lipoprotein carrier protein from Hahella chejuensis (strain KCTC 2396).